A 151-amino-acid chain; its full sequence is Small ribosomal subunit protein uS15 (151 aa).

Positions 1-20 are disordered; that stretch reads MARLHSGKRGSSGSTRPLRT.

The protein belongs to the universal ribosomal protein uS15 family. As to quaternary structure, part of the 30S ribosomal subunit.

This is Small ribosomal subunit protein uS15 from Methanococcus maripaludis (strain C7 / ATCC BAA-1331).